Reading from the N-terminus, the 722-residue chain is MTLPPPIASTAANTILEKLSFCKSLNHIKQLHAHILRTVINHKLNSFLFNLSVSSSSINLSYALNVFSSIPSPPESIVFNPFLRDLSRSSEPRATILFYQRIRHVGGRLDQFSFLPILKAVSKVSALFEGMELHGVAFKIATLCDPFVETGFMDMYASCGRINYARNVFDEMSHRDVVTWNTMIERYCRFGLVDEAFKLFEEMKDSNVMPDEMILCNIVSACGRTGNMRYNRAIYEFLIENDVRMDTHLLTALVTMYAGAGCMDMAREFFRKMSVRNLFVSTAMVSGYSKCGRLDDAQVIFDQTEKKDLVCWTTMISAYVESDYPQEALRVFEEMCCSGIKPDVVSMFSVISACANLGILDKAKWVHSCIHVNGLESELSINNALINMYAKCGGLDATRDVFEKMPRRNVVSWSSMINALSMHGEASDALSLFARMKQENVEPNEVTFVGVLYGCSHSGLVEEGKKIFASMTDEYNITPKLEHYGCMVDLFGRANLLREALEVIESMPVASNVVIWGSLMSACRIHGELELGKFAAKRILELEPDHDGALVLMSNIYAREQRWEDVRNIRRVMEEKNVFKEKGLSRIDQNGKSHEFLIGDKRHKQSNEIYAKLDEVVSKLKLAGYVPDCGSVLVDVEEEEKKDLVLWHSEKLALCFGLMNEEKEEEKDSCGVIRIVKNLRVCEDCHLFFKLVSKVYEREIIVRDRTRFHCYKNGLCSCRDYW.

13 PPR repeats span residues 75 to 109 (ESIV…GGRL), 110 to 140 (DQFS…AFKI), 145 to 175 (DPFV…MSHR), 176 to 210 (DVVT…NVMP), 211 to 245 (DEMI…DVRM), 246 to 276 (DTHL…MSVR), 277 to 307 (NLFV…TEKK), 308 to 342 (DLVC…GIKP), 343 to 377 (DVVS…GLES), 378 to 408 (ELSI…MPRR), 409 to 443 (NVVS…NVEP), 444 to 479 (NEVT…NITP), and 480 to 514 (KLEH…SNVV). The type E motif stretch occupies residues 515-590 (IWGSLMSACR…EKGLSRIDQN (76 aa)). The segment at 591–621 (GKSHEFLIGDKRHKQSNEIYAKLDEVVSKLK) is type E(+) motif. Residues 622–722 (LAGYVPDCGS…NGLCSCRDYW (101 aa)) form a type DYW motif region.

Belongs to the PPR family. PCMP-H subfamily.

The chain is Pentatricopeptide repeat-containing protein At4g14820 (PCMP-H3) from Arabidopsis thaliana (Mouse-ear cress).